The sequence spans 728 residues: Catalase-peroxidase 2 (728 aa).

Residues 91 to 214 constitute a cross-link (tryptophyl-tyrosyl-methioninium (Trp-Tyr) (with M-240)); it reads WHAAGTYRTG…LAAVQMGLIY (124 aa). The active-site Proton acceptor is His92. The segment at residues 214 to 240 is a cross-link (tryptophyl-tyrosyl-methioninium (Tyr-Met) (with W-91)); that stretch reads YVNPEGPNGNPDPAKAAVDIRETFARM. His255 lines the heme b pocket. The interval 338-362 is disordered; it reads WKPNGDAGANSIPDPYDPSRRRGPT.

The protein belongs to the peroxidase family. Peroxidase/catalase subfamily. Homodimer or homotetramer. Heme b serves as cofactor. Formation of the three residue Trp-Tyr-Met cross-link is important for the catalase, but not the peroxidase activity of the enzyme.

The enzyme catalyses H2O2 + AH2 = A + 2 H2O. It carries out the reaction 2 H2O2 = O2 + 2 H2O. In terms of biological role, bifunctional enzyme with both catalase and broad-spectrum peroxidase activity. In Cupriavidus pinatubonensis (strain JMP 134 / LMG 1197) (Cupriavidus necator (strain JMP 134)), this protein is Catalase-peroxidase 2.